Reading from the N-terminus, the 339-residue chain is MKTIRTQTPLRLGLAGGGTDINLYCDKYTGYVLNATISLYIHCTLIKREDGKIIFDSPDTNSYCEYESKEFLGNDGKLDIFKSIYNRIVKDFTKKPLSFSLHTYSDVPSGSGLGGSSTLVVGVIKAFAEWLNLPLGEYEIAKLAYEIEREDLGIVGGAQDQYAATFGGFNFMEFYNNKRVIVNPLRIKNWIASELEARTVLYFTNITREAKDIEEHKKGKLGDEKSLEAMHAIKQDAIKMKEALFRADFGTLAQILGKSWRSKKIISEIVSNDELERIYKLAIDNGAYSGKTSGAGAGGFMFFFVDPTKKYNLIKALRKEQGYVQDFSFTKEGVKSWRI.

17 to 20 serves as a coordination point for substrate; that stretch reads GGTD. ATP contacts are provided by residues S57 and 110-116; that span reads GSGLGGS. Residues S116 and E148 each contribute to the Mg(2+) site. The active-site Proton acceptor is D160.

Belongs to the GHMP kinase family.

The catalysed reaction is D-glycero-alpha-D-manno-heptose 7-phosphate + ATP = D-glycero-alpha-D-manno-heptose 1,7-bisphosphate + ADP + H(+). It functions in the pathway nucleotide-sugar biosynthesis; GDP-D-glycero-alpha-D-manno-heptose biosynthesis; GDP-D-glycero-alpha-D-manno-heptose from D-glycero-alpha-D-manno-heptose 7-phosphate: step 1/3. It participates in capsule biogenesis; capsule polysaccharide biosynthesis. Functionally, catalyzes the phosphorylation of D-glycero-alpha-D-manno-heptose 7-phosphate at the C-1 position to form D-glycero-alpha-D-manno-heptose 1,7-bisphosphate. The polypeptide is D-glycero-alpha-D-manno-heptose 7-phosphate kinase (Campylobacter jejuni subsp. jejuni serotype O:2 (strain ATCC 700819 / NCTC 11168)).